Consider the following 409-residue polypeptide: Dihydrolipoyllysine-residue succinyltransferase component of 2-oxoglutarate dehydrogenase complex (409 aa).

The 76-residue stretch at 2-77 (AIEIKAPTFP…LSNELLGKLN (76 aa)) folds into the Lipoyl-binding domain. The residue at position 43 (K43) is an N6-lipoyllysine. The region spanning 112 to 149 (ILSPAARKLAEEAGIDPNSIAGTGKGGRVTKEDVVAAV) is the Peripheral subunit-binding (PSBD) domain. Catalysis depends on residues H380 and D384.

This sequence belongs to the 2-oxoacid dehydrogenase family. In terms of assembly, forms a 24-polypeptide structural core with octahedral symmetry. Part of the 2-oxoglutarate dehydrogenase (OGDH) complex composed of E1 (2-oxoglutarate dehydrogenase), E2 (dihydrolipoamide succinyltransferase) and E3 (dihydrolipoamide dehydrogenase); the complex contains multiple copies of the three enzymatic components (E1, E2 and E3). It depends on (R)-lipoate as a cofactor.

It carries out the reaction N(6)-[(R)-dihydrolipoyl]-L-lysyl-[protein] + succinyl-CoA = N(6)-[(R)-S(8)-succinyldihydrolipoyl]-L-lysyl-[protein] + CoA. It functions in the pathway amino-acid degradation; L-lysine degradation via saccharopine pathway; glutaryl-CoA from L-lysine: step 6/6. Its function is as follows. E2 component of the 2-oxoglutarate dehydrogenase (OGDH) complex which catalyzes the second step in the conversion of 2-oxoglutarate to succinyl-CoA and CO(2). This Pseudomonas aeruginosa (strain ATCC 15692 / DSM 22644 / CIP 104116 / JCM 14847 / LMG 12228 / 1C / PRS 101 / PAO1) protein is Dihydrolipoyllysine-residue succinyltransferase component of 2-oxoglutarate dehydrogenase complex (sucB).